Reading from the N-terminus, the 653-residue chain is Brain-enriched guanylate kinase-associated protein (653 aa).

At Y186 the chain carries Phosphotyrosine. Residues 241 to 271 (PGSLSSHLSEASAQDLGFPEGLEKPGSRPPY) form a disordered region. The span at 243-252 (SLSSHLSEAS) shows a compositional bias: polar residues. Phosphoserine is present on residues S249, S278, S295, and S314. Residues 288–329 (RHQDRRPSVEGPGSDVGFLQAQNSTDSTAEEEEEEEEDTEAG) form a disordered region. Over residues 315 to 327 (TAEEEEEEEEDTE) the composition is skewed to acidic residues. Phosphoserine is present on residues S400 and S427. Position 435 is an asymmetric dimethylarginine (R435). 8 positions are modified to phosphoserine: S523, S533, S535, S558, S560, S564, S613, and S623. The segment at 587–653 (GASGSPEPEL…KAQLYGTLLN (67 aa)) is disordered.

As to quaternary structure, interacts with DLG4 and DLGAP1 and forms a ternary complex.

The protein resides in the cytoplasm. Its subcellular location is the membrane. May sustain the structure of the postsynaptic density (PSD). In Ovis aries (Sheep), this protein is Brain-enriched guanylate kinase-associated protein (BEGAIN).